We begin with the raw amino-acid sequence, 246 residues long: Pyridoxine 5'-phosphate synthase (246 aa).

Asn7 is a 3-amino-2-oxopropyl phosphate binding site. Residue 9-10 (DH) participates in 1-deoxy-D-xylulose 5-phosphate binding. Arg18 serves as a coordination point for 3-amino-2-oxopropyl phosphate. His43 acts as the Proton acceptor in catalysis. Residues Arg45 and His50 each contribute to the 1-deoxy-D-xylulose 5-phosphate site. Glu70 serves as the catalytic Proton acceptor. Thr100 lines the 1-deoxy-D-xylulose 5-phosphate pocket. The active-site Proton donor is His190. Residues Gly191 and 212 to 213 (GH) contribute to the 3-amino-2-oxopropyl phosphate site.

It belongs to the PNP synthase family. Homooctamer; tetramer of dimers.

It is found in the cytoplasm. It catalyses the reaction 3-amino-2-oxopropyl phosphate + 1-deoxy-D-xylulose 5-phosphate = pyridoxine 5'-phosphate + phosphate + 2 H2O + H(+). It participates in cofactor biosynthesis; pyridoxine 5'-phosphate biosynthesis; pyridoxine 5'-phosphate from D-erythrose 4-phosphate: step 5/5. Functionally, catalyzes the complicated ring closure reaction between the two acyclic compounds 1-deoxy-D-xylulose-5-phosphate (DXP) and 3-amino-2-oxopropyl phosphate (1-amino-acetone-3-phosphate or AAP) to form pyridoxine 5'-phosphate (PNP) and inorganic phosphate. In Bordetella petrii (strain ATCC BAA-461 / DSM 12804 / CCUG 43448), this protein is Pyridoxine 5'-phosphate synthase.